Reading from the N-terminus, the 586-residue chain is Paxillin (586 aa).

Met-1 is modified (N-acetylmethionine). An LD motif 1 motif is present at residues 3–15 (DLDALLADLESTT). Residues 13–138 (STTSHISKRP…PSPTVMSSSL (126 aa)) are disordered. A Phosphotyrosine; by PTK6 modification is found at Tyr-31. Pro residues predominate over residues 45–54 (VPPPVPPPPS). 2 positions are modified to phosphoserine: Ser-83 and Ser-85. The segment covering 86-98 (PIYSSSTKNSSAS) has biased composition (low complexity). Tyr-88 is subject to Phosphotyrosine. Residue Ser-106 is modified to Phosphoserine. A Phosphotyrosine; by PTK6 modification is found at Tyr-118. Residues Ser-119, Ser-126, and Ser-130 each carry the phosphoserine modification. Over residues 121-137 (PNKQKSAEPSPTVMSSS) the composition is skewed to polar residues. Position 132 is a phosphothreonine (Thr-132). Phosphoserine occurs at positions 137, 140, and 143. The LD motif 2 signature appears at 144–156 (ELDRLLLELNAVQ). A Phosphotyrosine modification is found at Tyr-210. The tract at residues 220 to 241 (GGKAGPLMKEKPKRNGGRGLED) is disordered. Residues 245-257 (SVESLLDELENSV) carry the LD motif 3 motif. The residue at position 259 (Ser-259) is a Phosphoserine. The interval 266–290 (VNQGEMSSPQRVTSSQQQTRISASS) is disordered. The residue at position 273 (Ser-273) is a Phosphoserine; by CDK5. Phosphoserine is present on residues Ser-279, Ser-287, Ser-290, Ser-301, Ser-317, Ser-327, and Ser-335. The tract at residues 291–310 (ATRELDELMASLSDFKFMAQ) is required for binding to PARVA and ILK. The LD motif 4 motif lies at 294–305 (ELDELMASLSDF). Residues 309–329 (AQGKTGSSSPPGGLSKPGSQL) form a disordered region. Positions 310–329 (QGKTGSSSPPGGLSKPGSQL) are enriched in low complexity. Positions 328–340 (QLDSMLGSLQSDL) match the LD motif 5 motif. 3 LIM zinc-binding domains span residues 353–403 (CGAC…CEKD), 412–462 (CYYC…CRKD), and 471–521 (CGGC…CEVH). At Ser-528 the chain carries Phosphoserine. The 51-residue stretch at 530-580 (CSGCQKPITGRCITAMAKKFHPEHFVCAFCLKQLNKGTFKEQNDKPYCQSC) folds into the LIM zinc-binding 4 domain.

This sequence belongs to the paxillin family. Interacts in vitro with VCL/vinculin as well as to the SH3 domain of SRC and, when tyrosine phosphorylated, to the SH2 domain of CRK. Interacts with GIT1. Interacts with NUDT16L1/SDOS. Interacts with PTK2/FAK1. Interacts with PTK2B/PYK2. Interacts with ASAP2. Interacts with unphosphorylated ITGA4. Interacts with RNF5. Interacts with PDCD10. Interacts with NEK3, the interaction is prolactin-dependent. Interacts with PTK6. Interacts with TGFB1I1. Interacts with SORBS1. Interacts with PARVB. Interacts (via LD motif 4) with PARVA/PARVIN. Interacts (via LD motif 4) with ILK. Interacts (via cytoplasmic domain) with CEACAM1; the interaction is phosphotyrosyl-dependent. Interacts with LIMA1; this complex stabilizes actin dynamics. Interacts with CD36 (via C-terminus). Interacts with TRIM15. Interacts with PAK4; PAK4 acts as a scaffold to suppport PAXI phosphorylation at Ser-301. Phosphorylated by MAPK1/ERK2. Phosphorylated on tyrosine residues during integrin-mediated cell adhesion, embryonic development, fibroblast transformation and following stimulation of cells by mitogens. Phosphorylation at Ser-273 by CDK5 reduces its interaction with PTK2/FAK1 in matrix-cell focal adhesions (MCFA) during oligodendrocytes (OLs) differentiation. Phosphorylation at Tyr-31 and Tyr-118 by PTK6 promote the activation of RAC1 via CRK/CrKII, thereby promoting migration and invasion. Phosphorylation at Ser-279 by SLK is required for PXN redistribution and cell motility. Phosphorylation at Ser-301 promotes focal adhesion disassembly during cell migration.

The protein localises to the cytoplasm. It is found in the cytoskeleton. The protein resides in the cell junction. It localises to the focal adhesion. Its subcellular location is the cell cortex. Functionally, cytoskeletal protein involved in actin-membrane attachment at sites of cell adhesion to the extracellular matrix (focal adhesion). Recruits other proteins such as TRIM15 to focal adhesion. The polypeptide is Paxillin (Rattus norvegicus (Rat)).